An 803-amino-acid chain; its full sequence is Palmitoyl thioesterase CPT1C (803 aa).

The Cytoplasmic segment spans residues 1–52; that stretch reads MAEAHQAVGFRPSLTSDGAEVELSAPVLQEIYLSGLRSWKRHLSRFWNDFLT. The chain crosses the membrane as a helical span at residues 53 to 75; the sequence is GVFPASPLSWLFLFSAIQLAWFL. The Lumenal segment spans residues 76-103; that stretch reads QLDPSLGLMEKIKELLPDWGGQHHGLRG. The helical transmembrane segment at 104 to 126 threads the bilayer; the sequence is VLAAALFASCLWGALIFTLHVAL. Residues 127 to 803 are Cytoplasmic-facing; sequence RLLLSYHGWL…SKASMTSTDF (677 aa). The active-site Proton acceptor is the H470. CoA is bound at residue 552 to 564; it reads GKSFIRRCHLSSD. Residues Y586, S588, and T599 each coordinate (R)-carnitine. Residues 761 to 803 are required for interaction with GRIA1; the sequence is LFQAGQHFKRRFRGSGKENSRHRCGFLSRQTGASKASMTSTDF. A disordered region spans residues 772–803; sequence FRGSGKENSRHRCGFLSRQTGASKASMTSTDF. Over residues 788-803 the composition is skewed to polar residues; that stretch reads SRQTGASKASMTSTDF.

Belongs to the carnitine/choline acetyltransferase family. Peripherally associated with AMPAR complex. AMPAR complex consists of an inner core made of 4 pore-forming GluA/GRIA proteins (GRIA1, GRIA2, GRIA3 and GRIA4) and 4 major auxiliary subunits arranged in a twofold symmetry. One of the two pairs of distinct binding sites is occupied either by CNIH2, CNIH3 or CACNG2, CACNG3. The other harbors CACNG2, CACNG3, CACNG4, CACNG8 or GSG1L. This inner core of AMPAR complex is complemented by outer core constituents binding directly to the GluA/GRIA proteins at sites distinct from the interaction sites of the inner core constituents. Outer core constituents include at least PRRT1, PRRT2, CKAMP44/SHISA9, FRRS1L and NRN1. The proteins of the inner and outer core serve as a platform for other, more peripherally associated AMPAR constituents, including CPT1C. Alone or in combination, these auxiliary subunits control the gating and pharmacology of the AMPAR complex and profoundly impact their biogenesis and protein processing. Interacts with SACM1L; the interaction regulates SACM1L phosphatidylinositol-3-phosphatase activity and translocation to endoplasmic reticulum/trans Golgi network in a malonyl-CoA dependent manner. Interacts with ATL1. In terms of tissue distribution, expressed predominantly in brain and testis. Expressed in motor neurons.

It localises to the cell projection. Its subcellular location is the dendrite. The protein localises to the axon. It is found in the endoplasmic reticulum membrane. The catalysed reaction is S-hexadecanoyl-L-cysteinyl-[protein] + H2O = L-cysteinyl-[protein] + hexadecanoate + H(+). Palmitoyl thioesterase specifically expressed in the endoplasmic reticulum of neurons. Modulates the trafficking of the glutamate receptor, AMPAR, to plasma membrane through depalmitoylation of GRIA1. Also regulates AMPR trafficking through the regulation of SACM1L phosphatidylinositol-3-phosphatase activity by interaction in a malonyl-CoA dependent manner. Binds malonyl-CoA and couples malonyl-CoA to ceramide levels, necessary for proper spine maturation and contributing to systemic energy homeostasis and appetite control. Binds to palmitoyl-CoA, but does not have carnitine palmitoyltransferase 1 catalytic activity or at very low levels. The chain is Palmitoyl thioesterase CPT1C from Homo sapiens (Human).